A 242-amino-acid chain; its full sequence is Ethanolamine ammonia-lyase small subunit (242 aa).

Positions 155 and 176 each coordinate adenosylcob(III)alamin.

The protein belongs to the EutC family. As to quaternary structure, the basic unit is a heterodimer which dimerizes to form tetramers. The heterotetramers trimerize; 6 large subunits form a core ring with 6 small subunits projecting outwards. Adenosylcob(III)alamin is required as a cofactor.

Its subcellular location is the bacterial microcompartment. The enzyme catalyses ethanolamine = acetaldehyde + NH4(+). It functions in the pathway amine and polyamine degradation; ethanolamine degradation. Functionally, catalyzes the deamination of various vicinal amino-alcohols to oxo compounds. Allows this organism to utilize ethanolamine as the sole source of nitrogen and carbon in the presence of external vitamin B12. This Clostridium acetobutylicum (strain ATCC 824 / DSM 792 / JCM 1419 / IAM 19013 / LMG 5710 / NBRC 13948 / NRRL B-527 / VKM B-1787 / 2291 / W) protein is Ethanolamine ammonia-lyase small subunit.